Here is a 113-residue protein sequence, read N- to C-terminus: Hydrogenase maturation factor HypA (113 aa).

Ni(2+) is bound at residue His2. Residues Cys73, Cys76, Cys89, and Cys92 each coordinate Zn(2+).

This sequence belongs to the HypA/HybF family.

Involved in the maturation of [NiFe] hydrogenases. Required for nickel insertion into the metal center of the hydrogenase. The protein is Hydrogenase maturation factor HypA of Rhodopseudomonas palustris (strain BisB5).